The primary structure comprises 440 residues: Serine hydroxymethyltransferase (440 aa).

Residues Leu-119 and Gly-123–Leu-125 each bind (6S)-5,6,7,8-tetrahydrofolate. N6-(pyridoxal phosphate)lysine is present on Lys-228. Position 370 to 372 (Ser-370 to Phe-372) interacts with (6S)-5,6,7,8-tetrahydrofolate.

It belongs to the SHMT family. As to quaternary structure, homodimer. Requires pyridoxal 5'-phosphate as cofactor.

The protein resides in the cytoplasm. It carries out the reaction (6R)-5,10-methylene-5,6,7,8-tetrahydrofolate + glycine + H2O = (6S)-5,6,7,8-tetrahydrofolate + L-serine. It functions in the pathway one-carbon metabolism; tetrahydrofolate interconversion. The protein operates within amino-acid biosynthesis; glycine biosynthesis; glycine from L-serine: step 1/1. In terms of biological role, catalyzes the reversible interconversion of serine and glycine with tetrahydrofolate (THF) serving as the one-carbon carrier. This reaction serves as the major source of one-carbon groups required for the biosynthesis of purines, thymidylate, methionine, and other important biomolecules. Also exhibits THF-independent aldolase activity toward beta-hydroxyamino acids, producing glycine and aldehydes, via a retro-aldol mechanism. This Chlorobium luteolum (strain DSM 273 / BCRC 81028 / 2530) (Pelodictyon luteolum) protein is Serine hydroxymethyltransferase.